A 310-amino-acid polypeptide reads, in one-letter code: Aspartate carbamoyltransferase catalytic subunit (310 aa).

R57 and T58 together coordinate carbamoyl phosphate. K86 contributes to the L-aspartate binding site. R107, H135, and Q138 together coordinate carbamoyl phosphate. Residues R168 and R229 each coordinate L-aspartate. Carbamoyl phosphate contacts are provided by L268 and P269.

The protein belongs to the aspartate/ornithine carbamoyltransferase superfamily. ATCase family. In terms of assembly, heterooligomer of catalytic and regulatory chains.

The catalysed reaction is carbamoyl phosphate + L-aspartate = N-carbamoyl-L-aspartate + phosphate + H(+). Its pathway is pyrimidine metabolism; UMP biosynthesis via de novo pathway; (S)-dihydroorotate from bicarbonate: step 2/3. Functionally, catalyzes the condensation of carbamoyl phosphate and aspartate to form carbamoyl aspartate and inorganic phosphate, the committed step in the de novo pyrimidine nucleotide biosynthesis pathway. In Thermococcus kodakarensis (strain ATCC BAA-918 / JCM 12380 / KOD1) (Pyrococcus kodakaraensis (strain KOD1)), this protein is Aspartate carbamoyltransferase catalytic subunit.